We begin with the raw amino-acid sequence, 253 residues long: Nurim homolog (253 aa).

The Nuclear portion of the chain corresponds to 1-2 (MA). A helical transmembrane segment spans residues 3–30 (TFAKVMLLLSSVATFGYTFFVVGKLMLF). Residues 31–56 (LSTPRSISKAHTWIFNLLDNKSRLET) lie on the Perinuclear space side of the membrane. A helical transmembrane segment spans residues 57–78 (AYGPIVFDTLYLIGFIFQHSFL). Over 79 to 96 (KSALVKNLWRKLGLAAAE) the chain is Nuclear. A helical transmembrane segment spans residues 97 to 113 (RTIYSLTSSICLHYLLK). Residues 114–132 (NWLPAQSIVLWQVDVDESA) lie on the Perinuclear space side of the membrane. A helical transmembrane segment spans residues 133-161 (PLWWTFVVTHGLGWAVIFGGSLIMDLPEL). The Nuclear segment spans residues 162–188 (LGVKQVYYDLKEYGEPVAYKSSELRNL). Residues 189-207 (YSHVRHPSFVGLSVILFAT) traverse the membrane as a helical segment. Topologically, residues 208–213 (NVMSLD) are perinuclear space. Residues 214–231 (RLLLASLLTVYMYVAWST) traverse the membrane as a helical segment. Residues 232–253 (DDKDVAYQKQQLRNKKHELKAQ) lie on the Nuclear side of the membrane.

This sequence belongs to the nurim family.

The protein localises to the nucleus inner membrane. The chain is Nurim homolog (nrm) from Drosophila pseudoobscura pseudoobscura (Fruit fly).